A 419-amino-acid polypeptide reads, in one-letter code: Putative BTB/POZ domain-containing protein L85 (419 aa).

In terms of domain architecture, BTB spans 16 to 89; sequence TDLTIVLKDD…FYDKTSTNSE (74 aa). The tract at residues 250 to 290 is disordered; that stretch reads SSSNDSDEDASETESEHNSETESEHNSETESEHNSETESKH. Over residues 263–290 the composition is skewed to basic and acidic residues; sequence ESEHNSETESEHNSETESEHNSETESKH.

It belongs to the mimivirus BTB/WD family.

This chain is Putative BTB/POZ domain-containing protein L85, found in Acanthamoeba polyphaga (Amoeba).